The chain runs to 1220 residues: Plasma membrane calcium-transporting ATPase 1 (1220 aa).

G2 bears the N-acetylglycine mark. Topologically, residues 2–105 (GDMANNSVAY…KTFLQLVWEA (104 aa)) are cytoplasmic. Phosphoserine is present on residues S8 and S17. The helical transmembrane segment at 106 to 126 (LQDVTLIILEIAAIVSLGLSF) threads the bilayer. At 127–154 (YQPPEGDNALCGEVSVGEEEGEGETGWI) the chain is on the extracellular side. Residues 155-175 (EGAAILLSVVCVVLVTAFNDW) form a helical membrane-spanning segment. Residues 176 to 366 (SKEKQFRGLQ…KEKSVLQGKL (191 aa)) lie on the Cytoplasmic side of the membrane. Residues 297–356 (EEEKKDEKKKEKKNKKQDGAIENRNKAKAQDGAAMEMQPLKSEEGGDGDEKDKKKANLPK) are disordered. 2 stretches are compositionally biased toward basic and acidic residues: residues 312–325 (KQDGAIENRNKAKA) and 337–356 (KSEEGGDGDEKDKKKANLPK). The residue at position 338 (S338) is a Phosphoserine. Residues 367-386 (TKLAVQIGKAGLLMSAITVI) form a helical membrane-spanning segment. The Extracellular portion of the chain corresponds to 387–418 (ILVLYFVIDTFWVQKRPWLAECTPIYIQYFVK). The helical transmembrane segment at 419–439 (FFIIGVTVLVVAVPEGLPLAV) threads the bilayer. Residues 440–855 (TISLAYSVKK…RNVYDSISKF (416 aa)) are Cytoplasmic-facing. D475 (4-aspartylphosphate intermediate) is an active-site residue. Mg(2+)-binding residues include D475, T477, D797, and D801. The helical transmembrane segment at 856 to 876 (LQFQLTVNVVAVIVAFTGACI) threads the bilayer. At 877-882 (TQDSPL) the chain is on the extracellular side. Residues 883-903 (KAVQMLWVNLIMDTLASLALA) form a helical membrane-spanning segment. Topologically, residues 904–927 (TEPPTESLLLRKPYGRNKPLISRT) are cytoplasmic. The chain crosses the membrane as a helical span at residues 928–948 (MMKNILGHAFYQLVVVFTLLF). Over 949-971 (AGEKFFDIDSGRNAPLHAPPSEH) the chain is Extracellular. A helical transmembrane segment spans residues 972 to 991 (YTIVFNTFVLMQLFNEINAR). At 992–1005 (KIHGERNVFEGIFN) the chain is on the cytoplasmic side. Residues 1006 to 1027 (NAIFCTIVLGTFVVQIIIVQFG) form a helical membrane-spanning segment. At 1028–1039 (GKPFSCSELSIE) the chain is on the extracellular side. A helical membrane pass occupies residues 1040–1060 (QWLWSIFLGMGTLLWGQLIST). The Cytoplasmic segment spans residues 1061 to 1220 (IPTSRLKFLK…SPLHSLETSL (160 aa)). Residues 1100–1117 (LRRGQILWFRGLNRIQTQ) are calmodulin-binding subdomain A. T1116 carries the post-translational modification Phosphothreonine; by PKC. The segment at 1118 to 1127 (IRVVNAFRSS) is calmodulin-binding subdomain B. Residues 1118-1220 (IRVVNAFRSS…SPLHSLETSL (103 aa)) are required for basolateral membrane targeting. Phosphoserine is present on residues S1140 and S1155. Residues 1160 to 1220 (PLIDDTDAED…SPLHSLETSL (61 aa)) are disordered. T1165 is subject to Phosphothreonine. Phosphoserine occurs at positions 1178 and 1182. Residues 1200 to 1220 (MNKSATSSSPGSPLHSLETSL) show a composition bias toward polar residues.

The protein belongs to the cation transport ATPase (P-type) (TC 3.A.3) family. Type IIB subfamily. In terms of assembly, monomer. Dimer. Oligomer. Calmodulin binding. Interacts with PDZD11. Interacts with SLC35G1 and STIM1. Interacts with YWHAE; interacts with the monomeric and dimeric forms of the YWHAE but prefer the monomer form; this interaction inhibits calcium-transporting ATPase activity. Interacts with NPTN; this interaction stabilizes ATP2B1 and increases ATPase activity; this interaction controls T cell calcium homeostasis following T cell activation. Interacts with EPB41; regulates small intestinal calcium absorption through regulation of membrane expression of ATP2B1.

The protein resides in the cell membrane. Its subcellular location is the basolateral cell membrane. It is found in the synapse. It localises to the presynaptic cell membrane. The protein localises to the cytoplasmic vesicle. The protein resides in the secretory vesicle. Its subcellular location is the synaptic vesicle membrane. The catalysed reaction is Ca(2+)(in) + ATP + H2O = Ca(2+)(out) + ADP + phosphate + H(+). Catalyzes the hydrolysis of ATP coupled with the transport of calcium from the cytoplasm to the extracellular space thereby maintaining intracellular calcium homeostasis. Plays a role in blood pressure regulation through regulation of intracellular calcium concentration and nitric oxide production leading to regulation of vascular smooth muscle cells vasoconstriction. Positively regulates bone mineralization through absorption of calcium from the intestine. Plays dual roles in osteoclast differentiation and survival by regulating RANKL-induced calcium oscillations in preosteoclasts and mediating calcium extrusion in mature osteoclasts. Regulates insulin sensitivity through calcium/calmodulin signaling pathway by regulating AKT1 activation and NOS3 activation in endothelial cells. May play a role in synaptic transmission by modulating calcium and proton dynamics at the synaptic vesicles. This is Plasma membrane calcium-transporting ATPase 1 from Sus scrofa (Pig).